Consider the following 908-residue polypeptide: Isoleucine--tRNA ligase (908 aa).

Residues 59–69 carry the 'HIGH' region motif; the sequence is PYANGDLHIGH. Glu554 lines the L-isoleucyl-5'-AMP pocket. Residues 595–599 carry the 'KMSKS' region motif; the sequence is KMSKS. ATP is bound at residue Lys598. The Zn(2+) site is built by Cys882, Cys885, Cys898, and Cys901.

It belongs to the class-I aminoacyl-tRNA synthetase family. IleS type 1 subfamily. In terms of assembly, monomer. Zn(2+) is required as a cofactor.

The protein localises to the cytoplasm. The enzyme catalyses tRNA(Ile) + L-isoleucine + ATP = L-isoleucyl-tRNA(Ile) + AMP + diphosphate. In terms of biological role, catalyzes the attachment of isoleucine to tRNA(Ile). As IleRS can inadvertently accommodate and process structurally similar amino acids such as valine, to avoid such errors it has two additional distinct tRNA(Ile)-dependent editing activities. One activity is designated as 'pretransfer' editing and involves the hydrolysis of activated Val-AMP. The other activity is designated 'posttransfer' editing and involves deacylation of mischarged Val-tRNA(Ile). The polypeptide is Isoleucine--tRNA ligase (Mesoplasma florum (strain ATCC 33453 / NBRC 100688 / NCTC 11704 / L1) (Acholeplasma florum)).